A 138-amino-acid chain; its full sequence is ATP synthase epsilon chain (138 aa).

It belongs to the ATPase epsilon chain family. F-type ATPases have 2 components, CF(1) - the catalytic core - and CF(0) - the membrane proton channel. CF(1) has five subunits: alpha(3), beta(3), gamma(1), delta(1), epsilon(1). CF(0) has three main subunits: a, b and c.

It localises to the cell inner membrane. Produces ATP from ADP in the presence of a proton gradient across the membrane. This chain is ATP synthase epsilon chain, found in Polynucleobacter necessarius subsp. necessarius (strain STIR1).